A 215-amino-acid polypeptide reads, in one-letter code: UPF0502 protein Shew_1617 (215 aa).

It belongs to the UPF0502 family.

The protein is UPF0502 protein Shew_1617 of Shewanella loihica (strain ATCC BAA-1088 / PV-4).